Consider the following 417-residue polypeptide: Histidine--tRNA ligase (417 aa).

Belongs to the class-II aminoacyl-tRNA synthetase family. Homodimer.

The protein resides in the cytoplasm. It carries out the reaction tRNA(His) + L-histidine + ATP = L-histidyl-tRNA(His) + AMP + diphosphate + H(+). This Nitratidesulfovibrio vulgaris (strain DP4) (Desulfovibrio vulgaris) protein is Histidine--tRNA ligase.